The sequence spans 105 residues: Thiosulfate sulfurtransferase GlpE (105 aa).

Positions 16-104 constitute a Rhodanese domain; the sequence is DKEDVVIADI…WEAAYSEKVE (89 aa). Cys64 (cysteine persulfide intermediate) is an active-site residue.

Belongs to the GlpE family.

The protein localises to the cytoplasm. It carries out the reaction thiosulfate + hydrogen cyanide = thiocyanate + sulfite + 2 H(+). The catalysed reaction is thiosulfate + [thioredoxin]-dithiol = [thioredoxin]-disulfide + hydrogen sulfide + sulfite + 2 H(+). Functionally, transferase that catalyzes the transfer of sulfur from thiosulfate to thiophilic acceptors such as cyanide or dithiols. May function in a CysM-independent thiosulfate assimilation pathway by catalyzing the conversion of thiosulfate to sulfite, which can then be used for L-cysteine biosynthesis. The protein is Thiosulfate sulfurtransferase GlpE of Pseudoalteromonas translucida (strain TAC 125).